A 5087-amino-acid chain; its full sequence is Nonribosomal peptide synthetase sidC (5087 aa).

The tract at residues 165 to 563 (HEMVRHTGNE…NGELQCMGRI (399 aa)) is adenylation 1. The Carrier 1 domain maps to 671-744 (EPAGDIEQKI…KMAALVLKSQ (74 aa)). Ser-705 is modified (O-(pantetheine 4'-phosphoryl)serine). Residues 782–1112 (DIIPCSPIQT…LFDTLFVWQD (331 aa)) form a condensation 1 region. The adenylation 2 stretch occupies residues 1217–1611 (ELAKTDSERI…GRRDDLVKIR (395 aa)). In terms of domain architecture, Carrier 2 spans 1740-1817 (ENLTDNEAKV…RLTRKISQSI (78 aa)). O-(pantetheine 4'-phosphoryl)serine is present on Ser-1777. Residues 1855-2272 (KILPCTSLQE…RVMDFSLVES (418 aa)) form a condensation 2 region. One can recognise a Carrier 3 domain in the interval 2302 to 2378 (EEWSAESLEI…EIASVLQGSK (77 aa)). O-(pantetheine 4'-phosphoryl)serine is present on Ser-2339. The tract at residues 2419 to 2831 (PCTTPQAGML…STSSSLDTAS (413 aa)) is condensation 3. An adenylation 3 region spans residues 2860-3258 (ATRHPSRVAL…GRIDDQVKLR (399 aa)). The Carrier 4 domain occupies 3387–3464 (TEDTDTIRKI…LLAKAVESPD (78 aa)). Ser-3424 bears the O-(pantetheine 4'-phosphoryl)serine mark. The tract at residues 3506–3910 (ITPCTSLQDG…RSLVEEPFSN (405 aa)) is condensation 4. The 77-residue stretch at 3943–4019 (FQWSQAASLL…TMMAEVTVNG (77 aa)) folds into the Carrier 5 domain. Ser-3980 is subject to O-(pantetheine 4'-phosphoryl)serine. Residues 4051–4416 (EHIYPATPLQ…EYSICVELEA (366 aa)) are condensation 5. Positions 4496–4569 (SLLEERIRDT…KMAEIVNSAR (74 aa)) constitute a Carrier 6 domain. Ser-4530 is modified (O-(pantetheine 4'-phosphoryl)serine). Positions 4610–4913 (FLPATAGQVY…IQSDLHEIGS (304 aa)) are condensation 6. Positions 5013–5048 (DVYKVSPPGSQLSQDSPEKQEANNKPSPQPSVDIEA) are disordered.

This sequence belongs to the NRP synthetase family.

The protein operates within siderophore biosynthesis. Nonribosomal peptide synthetase; part of the siderophore biosynthetic pathway. Arthroderma benhamiae produces 2 types of extracellular siderophores, ferrichrome C and ferricrocin. The biosynthesis of these siderophores depends on the hydroxylation of ornithine to N(5)-hydroxyornithine, catalyzed by the monooxygenase sidA. The structure of ferricrocin differs from ferrichrome C only by a serine for alanine substitution and the assembly of both siderophores is suggested to be performed by the nonribosomal peptide synthase (NRPS) sidC. This chain is Nonribosomal peptide synthetase sidC, found in Arthroderma benhamiae (strain ATCC MYA-4681 / CBS 112371) (Trichophyton mentagrophytes).